The following is a 297-amino-acid chain: Cyclin-dependent kinase 1 (297 aa).

N-acetylmethionine is present on Met-1. Tyr-4 carries the post-translational modification Phosphotyrosine; by PKR. A Protein kinase domain is found at 4–287; that stretch reads YTKIEKIGEG…GKMALNHPYF (284 aa). N6-acetyllysine; alternate is present on residues Lys-6 and Lys-9. Glycyl lysine isopeptide (Lys-Gly) (interchain with G-Cter in SUMO2); alternate cross-links involve residues Lys-6 and Lys-9. 10 to 18 is an ATP binding site; that stretch reads IGEGTYGVV. Phosphothreonine; by PKMYT1 is present on Thr-14. The residue at position 15 (Tyr-15) is a Phosphotyrosine; by PKMYT1, WEE1 and WEE2. Position 15 is a phosphotyrosine; by WEE1 and WEE2 (Tyr-15). A Phosphotyrosine modification is found at Tyr-19. A Glycyl lysine isopeptide (Lys-Gly) (interchain with G-Cter in SUMO2) cross-link involves residue Lys-20. Residue Lys-33 coordinates ATP. Position 39 is a phosphoserine (Ser-39). Tyr-77 is modified (phosphotyrosine). Catalysis depends on Asp-128, which acts as the Proton acceptor. Lys-139 participates in a covalent cross-link: Glycyl lysine isopeptide (Lys-Gly) (interchain with G-Cter in SUMO2). Position 141 is a phosphothreonine (Thr-141). Phosphothreonine; by CAK is present on Thr-161. Ser-178 bears the Phosphoserine mark. Thr-222 carries the post-translational modification Phosphothreonine. Lys-245 bears the N6-succinyllysine mark. Residue Ser-248 is modified to Phosphoserine.

It belongs to the protein kinase superfamily. CMGC Ser/Thr protein kinase family. CDC2/CDKX subfamily. In terms of assembly, forms a stable but non-covalent complex with a regulatory subunit and with a cyclin. Interacts with cyclins-B (CCNB1, CCNB2 and CCNB3) to form a serine/threonine kinase holoenzyme complex also known as maturation promoting factor (MPF). The cyclin subunit imparts substrate specificity to the complex. Can also form CDK1-cylin-D and CDK1-cyclin-E complexes that phosphorylate RB1 in vitro. Binds to RB1 and other transcription factors such as FOXO1 and RUNX2. Promotes G2-M transition when in complex with a cyclin-B. Interacts with DLGAP5. Binds to the CDK inhibitors CDKN1A/p21 and CDKN1B/p27. Isoform 2 is unable to complex with cyclin-B1 and also fails to bind to CDKN1A/p21. Interacts with catalytically active CCNB1 and RALBP1 during mitosis to form an endocytotic complex during interphase. Associates with cyclins-A and B1 during S-phase in regenerating hepatocytes. Interacts with FANCC. Interacts with CEP63; this interaction recruits CDK1 to centrosomes. Interacts with CENPA. Interacts with NR1D1. Interacts with proteasome subunit PSMA8; to participate in meiosis progression during spermatogenesis. In terms of processing, phosphorylation at Thr-161 by CAK/CDK7 activates kinase activity. Phosphorylation at Thr-14 and Tyr-15 by PKMYT1 prevents nuclear translocation. Phosphorylation at Tyr-15 by WEE1 and WEE2 inhibits the protein kinase activity and acts as a negative regulator of entry into mitosis (G2 to M transition). Phosphorylation by PKMYT1 and WEE1 takes place during mitosis to keep CDK1-cyclin-B complexes inactive until the end of G2. By the end of G2, PKMYT1 and WEE1 are inactivated, but CDC25A and CDC25B are activated. Dephosphorylation by active CDC25A and CDC25B at Thr-14 and Tyr-15, leads to CDK1 activation at the G2-M transition. Phosphorylation at Tyr-15 by WEE2 during oogenesis is required to maintain meiotic arrest in oocytes during the germinal vesicle (GV) stage, a long period of quiescence at dictyate prophase I, leading to prevent meiotic reentry. Phosphorylation by WEE2 is also required for metaphase II exit during egg activation to ensure exit from meiosis in oocytes and promote pronuclear formation. Phosphorylated at Tyr-4 by PKR/EIF2AK2 upon genotoxic stress. This phosphorylation triggers CDK1 polyubiquitination and subsequent proteolysis, thus leading to G2 arrest. Polyubiquitinated upon genotoxic stress.

Its subcellular location is the nucleus. The protein resides in the cytoplasm. It localises to the mitochondrion. The protein localises to the cytoskeleton. It is found in the microtubule organizing center. Its subcellular location is the centrosome. The protein resides in the spindle. It carries out the reaction L-seryl-[protein] + ATP = O-phospho-L-seryl-[protein] + ADP + H(+). It catalyses the reaction L-threonyl-[protein] + ATP = O-phospho-L-threonyl-[protein] + ADP + H(+). The catalysed reaction is [DNA-directed RNA polymerase] + ATP = phospho-[DNA-directed RNA polymerase] + ADP + H(+). Its activity is regulated as follows. Phosphorylation at Thr-14 or Tyr-15 inactivates the enzyme, while phosphorylation at Thr-161 activates it. Activated through a multistep process; binding to cyclin-B is required for relocation of cyclin-kinase complexes to the nucleus, activated by CAK/CDK7-mediated phosphorylation on Thr-161, and CDC25-mediated dephosphorylation of inhibitory phosphorylation on Thr-14 and Tyr-15. Activity is restricted during S-phase in an ATR-dependent manner to prevent premature entry into G2. Repressed by the CDK inhibitors CDKN1A/p21 and CDKN1B/p27 during the G1 phase and by CDKN1A/p21 at the G1-S checkpoint upon DNA damage. Transient activation by rapid and transient dephosphorylation at Tyr-15 triggered by TGFB1. Its function is as follows. Plays a key role in the control of the eukaryotic cell cycle by modulating the centrosome cycle as well as mitotic onset; promotes G2-M transition via association with multiple interphase cyclins. Phosphorylates PARVA/actopaxin, APC, AMPH, APC, BARD1, Bcl-xL/BCL2L1, BRCA2, CALD1, CASP8, CDC7, CDC20, CDC25A, CDC25C, CC2D1A, CENPA, CSNK2 proteins/CKII, FZR1/CDH1, CDK7, CEBPB, CHAMP1, DMD/dystrophin, EEF1 proteins/EF-1, EZH2, KIF11/EG5, EGFR, FANCG, FOS, GFAP, GOLGA2/GM130, GRASP1, UBE2A/hHR6A, HIST1H1 proteins/histone H1, HMGA1, HIVEP3/KRC, KAT5, LMNA, LMNB, LBR, LATS1, MAP1B, MAP4, MARCKS, MCM2, MCM4, MKLP1, MLST8, MYB, NEFH, NFIC, NPC/nuclear pore complex, PITPNM1/NIR2, NPM1, NCL, NUCKS1, NPM1/numatrin, ORC1, PRKAR2A, EEF1E1/p18, EIF3F/p47, p53/TP53, NONO/p54NRB, PAPOLA, PLEC/plectin, RB1, TPPP, UL40/R2, RAB4A, RAP1GAP, RBBP8/CtIP, RCC1, RPS6KB1/S6K1, KHDRBS1/SAM68, ESPL1, SKI, BIRC5/survivin, STIP1, TEX14, beta-tubulins, MAPT/TAU, NEDD1, VIM/vimentin, TK1, FOXO1, RUNX1/AML1, SAMHD1, SIRT2, CGAS and RUNX2. CDK1/CDC2-cyclin-B controls pronuclear union in interphase fertilized eggs. Essential for early stages of embryonic development. During G2 and early mitosis, CDC25A/B/C-mediated dephosphorylation activates CDK1/cyclin complexes which phosphorylate several substrates that trigger at least centrosome separation, Golgi dynamics, nuclear envelope breakdown and chromosome condensation. Once chromosomes are condensed and aligned at the metaphase plate, CDK1 activity is switched off by WEE1- and PKMYT1-mediated phosphorylation to allow sister chromatid separation, chromosome decondensation, reformation of the nuclear envelope and cytokinesis. Phosphorylates KRT5 during prometaphase and metaphase. Inactivated by PKR/EIF2AK2- and WEE1-mediated phosphorylation upon DNA damage to stop cell cycle and genome replication at the G2 checkpoint thus facilitating DNA repair. Reactivated after successful DNA repair through WIP1-dependent signaling leading to CDC25A/B/C-mediated dephosphorylation and restoring cell cycle progression. Catalyzes lamin (LMNA, LMNB1 and LMNB2) phosphorylation at the onset of mitosis, promoting nuclear envelope breakdown. In proliferating cells, CDK1-mediated FOXO1 phosphorylation at the G2-M phase represses FOXO1 interaction with 14-3-3 proteins and thereby promotes FOXO1 nuclear accumulation and transcription factor activity, leading to cell death of postmitotic neurons. The phosphorylation of beta-tubulins regulates microtubule dynamics during mitosis. NEDD1 phosphorylation promotes PLK1-mediated NEDD1 phosphorylation and subsequent targeting of the gamma-tubulin ring complex (gTuRC) to the centrosome, an important step for spindle formation. In addition, CC2D1A phosphorylation regulates CC2D1A spindle pole localization and association with SCC1/RAD21 and centriole cohesion during mitosis. The phosphorylation of Bcl-xL/BCL2L1 after prolongated G2 arrest upon DNA damage triggers apoptosis. In contrast, CASP8 phosphorylation during mitosis prevents its activation by proteolysis and subsequent apoptosis. This phosphorylation occurs in cancer cell lines, as well as in primary breast tissues and lymphocytes. EZH2 phosphorylation promotes H3K27me3 maintenance and epigenetic gene silencing. CALD1 phosphorylation promotes Schwann cell migration during peripheral nerve regeneration. CDK1-cyclin-B complex phosphorylates NCKAP5L and mediates its dissociation from centrosomes during mitosis. Regulates the amplitude of the cyclic expression of the core clock gene BMAL1 by phosphorylating its transcriptional repressor NR1D1, and this phosphorylation is necessary for SCF(FBXW7)-mediated ubiquitination and proteasomal degradation of NR1D1. Phosphorylates EML3 at 'Thr-881' which is essential for its interaction with HAUS augmin-like complex and TUBG1. Phosphorylates CGAS during mitosis, leading to its inhibition, thereby preventing CGAS activation by self DNA during mitosis. Phosphorylates SKA3 during mitosis which promotes SKA3 binding to the NDC80 complex and anchoring of the SKA complex to kinetochores, to enable stable attachment of mitotic spindle microtubules to kinetochores. The protein is Cyclin-dependent kinase 1 (CDK1) of Pongo abelii (Sumatran orangutan).